The chain runs to 363 residues: MAAQESLHVKTPLRDSMALSKVAGTSVFLKMDSSQPSGSFKIRGIGHLCKMKAKQGCKHFVCSSVVQIWGSRMRGRSHSGDEQPHVRSQALLPDTPSPLTAGNAGMATAYAARRLGLPATIVVPSTTPALTIERLKNEGATVEVVGEMLDEAIQLAKALEKNNPGWVYISPFDDPLIWEGHTSLVKELKETLSAKPGAIVLSVGGGGLLCGVVQGLREVGWEDVPIIAMETFGAHSFHAAVKEGKLVTLPKITSVAKALGVNTVGAQTLKLFYEHPIFSEVISDQEAVTAIEKFVDDEKILVEPACGAALAAVYSGVVCRLQAEGRLQTPLASLVVIVCGGSNISLAQLQALKAQLGLNELLK.

Residue alanine 2 is modified to N-acetylalanine. Lysine 41 is subject to N6-(pyridoxal phosphate)lysine. Positions arginine 74 to proline 98 are disordered. Residue proline 164 participates in pyridoxal 5'-phosphate binding.

It belongs to the serine/threonine dehydratase family. Homodimer. Pyridoxal 5'-phosphate is required as a cofactor. In terms of tissue distribution, predominantly expressed in the periportal regions of the liver.

It is found in the cytoplasm. It catalyses the reaction L-serine = pyruvate + NH4(+). It carries out the reaction L-threonine = 2-oxobutanoate + NH4(+). Its pathway is carbohydrate biosynthesis; gluconeogenesis. In terms of biological role, catalyzes the pyridoxal-phosphate-dependent dehydrative deamination of L-threonine and L-serine to ammonia and alpha-ketobutyrate and pyruvate, respectively. In Rattus norvegicus (Rat), this protein is L-serine dehydratase/L-threonine deaminase (Sds).